Here is a 153-residue protein sequence, read N- to C-terminus: MRKKIEIFTDGSCFGNPGPGGYGAILRYKKYEKEHSAGFLLTTNNRMELMAAIIALEFLRDPCEAIVYIDSKYVHQGVIQWIYNWKKHNWKNSAKKIIKNLDLWQRLDVVSNLHVIHWRWVKSHTGHPENERCDELARIAAEHPKFEDIGYKR.

An RNase H type-1 domain is found at 1-142 (MRKKIEIFTD…CDELARIAAE (142 aa)). Residues Asp-10, Glu-48, Asp-70, and Asp-134 each contribute to the Mg(2+) site.

This sequence belongs to the RNase H family. Monomer. It depends on Mg(2+) as a cofactor.

It localises to the cytoplasm. The catalysed reaction is Endonucleolytic cleavage to 5'-phosphomonoester.. In terms of biological role, endonuclease that specifically degrades the RNA of RNA-DNA hybrids. The polypeptide is Ribonuclease H (Baumannia cicadellinicola subsp. Homalodisca coagulata).